The following is a 233-amino-acid chain: H-2 class II histocompatibility antigen, A-F alpha chain (233 aa).

Positions 1 to 88 (EDDIEADHVG…KRSNFTPATN (88 aa)) are alpha-1. At 1–195 (EDDIEADHVG…IPAPMSELTE (195 aa)) the chain is on the extracellular side. Residues 89–182 (EAPQATVFPK…GLEEPVLKHW (94 aa)) are alpha-2. The Ig-like C1-type domain occupies 91-183 (PQATVFPKSP…LEEPVLKHWE (93 aa)). A disulfide bridge links cysteine 111 with cysteine 167. An N-linked (GlcNAc...) asparagine glycan is attached at asparagine 122. Residues 183–195 (EPEIPAPMSELTE) form a connecting peptide region. Residues 196–221 (TVVCALGLSVGLVGIVVGTIFIIQGL) form a helical membrane-spanning segment. Topologically, residues 222–233 (RSGGTSRHPGPL) are cytoplasmic.

It belongs to the MHC class II family.

The protein localises to the membrane. The polypeptide is H-2 class II histocompatibility antigen, A-F alpha chain (H2-Aa) (Mus musculus (Mouse)).